Consider the following 439-residue polypeptide: GTPase Der (439 aa).

2 EngA-type G domains span residues 4–169 (AMVS…PQEE) and 177–352 (IKIA…EEYN). GTP-binding positions include 10-17 (GRPNVGKS), 57-61 (DTGGL), 120-123 (NKVD), 183-190 (GKPNVGKS), 230-234 (DTAGI), and 295-298 (NKWD). The region spanning 353–437 (KRITTGLLNN…PVVISTRKRG (85 aa)) is the KH-like domain.

This sequence belongs to the TRAFAC class TrmE-Era-EngA-EngB-Septin-like GTPase superfamily. EngA (Der) GTPase family. Associates with the 50S ribosomal subunit.

Functionally, GTPase that plays an essential role in the late steps of ribosome biogenesis. In Thermoanaerobacter pseudethanolicus (strain ATCC 33223 / 39E) (Clostridium thermohydrosulfuricum), this protein is GTPase Der.